Here is a 118-residue protein sequence, read N- to C-terminus: Large ribosomal subunit protein uL22 (118 aa).

Belongs to the universal ribosomal protein uL22 family. In terms of assembly, part of the 50S ribosomal subunit.

In terms of biological role, this protein binds specifically to 23S rRNA; its binding is stimulated by other ribosomal proteins, e.g. L4, L17, and L20. It is important during the early stages of 50S assembly. It makes multiple contacts with different domains of the 23S rRNA in the assembled 50S subunit and ribosome. The globular domain of the protein is located near the polypeptide exit tunnel on the outside of the subunit, while an extended beta-hairpin is found that lines the wall of the exit tunnel in the center of the 70S ribosome. The chain is Large ribosomal subunit protein uL22 from Prosthecochloris aestuarii (strain DSM 271 / SK 413).